Here is a 428-residue protein sequence, read N- to C-terminus: Phosphomethylpyrimidine synthase 1 (428 aa).

Substrate is bound by residues Met-94, Tyr-123, His-162, Ser-184–Gly-186, Asn-225–Arg-228, and Glu-264. Residue His-268 participates in Zn(2+) binding. Tyr-291 is a substrate binding site. His-332 provides a ligand contact to Zn(2+). [4Fe-4S] cluster is bound by residues Cys-408, Cys-411, and Cys-415.

The protein belongs to the ThiC family. The cofactor is [4Fe-4S] cluster.

The enzyme catalyses 5-amino-1-(5-phospho-beta-D-ribosyl)imidazole + S-adenosyl-L-methionine = 4-amino-2-methyl-5-(phosphooxymethyl)pyrimidine + CO + 5'-deoxyadenosine + formate + L-methionine + 3 H(+). The protein operates within cofactor biosynthesis; thiamine diphosphate biosynthesis. Its function is as follows. Catalyzes the synthesis of the hydroxymethylpyrimidine phosphate (HMP-P) moiety of thiamine from aminoimidazole ribotide (AIR) in a radical S-adenosyl-L-methionine (SAM)-dependent reaction. This is Phosphomethylpyrimidine synthase 1 from Methanosarcina barkeri (strain Fusaro / DSM 804).